The sequence spans 602 residues: Fumarate reductase flavoprotein subunit (602 aa).

Residues 12–16, 36–38, 44–52, 156–158, 192–193, and aspartate 212 contribute to the FAD site; these read GAGGA, ISK, SHTVAAEGG, HFV, and AT. At histidine 45 the chain carries Tele-8alpha-FAD histidine. Active-site residues include histidine 233 and arginine 249. FAD-binding positions include 356–357, glutamate 380, and 391–397; these read HY and RLGSNSL. The tract at residues 581–602 is disordered; the sequence is YGGEADAADKAEAANKKEKANG. The segment covering 587–602 has biased composition (basic and acidic residues); sequence AADKAEAANKKEKANG.

This sequence belongs to the FAD-dependent oxidoreductase 2 family. FRD/SDH subfamily. In terms of assembly, part of an enzyme complex containing four subunits: a flavoprotein (FrdA), an iron-sulfur protein (FrdB), and two hydrophobic anchor proteins (FrdC and FrdD). Can be cross-linked to SdhE. Purified from membrane fractions associated with protoporphyrinogen IX dehydrogenase (hemG). The cofactor is FAD.

The protein resides in the cell inner membrane. The enzyme catalyses a quinone + succinate = fumarate + a quinol. The catalysed reaction is a menaquinone + succinate = a menaquinol + fumarate. Its activity is regulated as follows. Inhibited by oxaloacetate, a substrate analog. Its function is as follows. Two distinct, membrane-bound, FAD-containing enzymes are responsible for the catalysis of fumarate and succinate interconversion; fumarate reductase is used during anaerobic growth, and succinate dehydrogenase is used during aerobic growth. The QFR enzyme complex binds 2 quinones in or near the membrane; 1 near the [3Fe-4S] cluster (QP is proximal to the [3Fe-4S] cluster, on the cytoplasmic side of the membrane) while QD (the distal cluster) is on the other side of the membrane. It is not clear if both of the quinol-binding sites are functionally relevant. This is Fumarate reductase flavoprotein subunit (frdA) from Escherichia coli (strain K12).